A 2130-amino-acid polypeptide reads, in one-letter code: COPII coat assembly protein SEC16 (2130 aa).

Composition is skewed to basic and acidic residues over residues 27-38 (KILEKEPEHEPS), 50-72 (DDVK…KDDL), and 88-97 (EAIKKNKLDP). Disordered stretches follow at residues 27 to 516 (KILE…TQNK), 532 to 585 (FLED…NDAY), 598 to 647 (PAAR…ATMS), 810 to 842 (QGAQ…SSLI), 1347 to 1366 (DESK…SPAV), 1374 to 1519 (DITS…NNGS), 1558 to 1731 (PSIS…TPSD), 1753 to 1997 (DTET…LGEK), and 2014 to 2130 (IPLE…LDQK). Polar residues predominate over residues 98 to 120 (QDQTAAGDSGRSQPDLSPRTTTG). Composition is skewed to basic and acidic residues over residues 128-138 (ETKDTDGHDSA), 149-170 (DDNR…KSEL), 178-188 (EADKEETKDFD), and 199-216 (KAGK…EAKI). Polar residues-rich tracts occupy residues 267-279 (WESN…SSQA) and 293-335 (APSS…PSSQ). The segment covering 380-395 (DFLKEIQKQEESKDTD) has biased composition (basic and acidic residues). The segment covering 405-420 (TPSAQPSSQDQDTSQD) has biased composition (low complexity). Over residues 421 to 431 (MRNYSTTQTDI) the composition is skewed to polar residues. 2 stretches are compositionally biased toward basic and acidic residues: residues 447-481 (PKGE…HDFL) and 504-513 (ENKDSDKFET). The span at 538-568 (TSQTQTLKSKSNKQTYLPSTTNPSTTPVVPT) shows a compositional bias: low complexity. Over residues 601–617 (RSTNKYAPGSSNHNSPP) the composition is skewed to polar residues. 5 stretches are compositionally biased toward polar residues: residues 1374–1388 (DITS…TSPQ), 1399–1420 (VTTN…NGMS), 1428–1498 (LYSN…QSEN), 1505–1519 (YSAN…NNGS), and 1559–1574 (SISN…SNPI). Positions 1627–1640 (TESRESEKSSELRD) are enriched in basic and acidic residues. Polar residues-rich tracts occupy residues 1701–1714 (SGGN…SSDK) and 1722–1731 (TSMLVDTPSD). A compositionally biased stretch (basic and acidic residues) spans 1753–1779 (DTETLHDRNEVKEAPNQESIDTKEEAS). Polar residues-rich tracts occupy residues 1793 to 1803 (ASTSQSRNINV) and 1819 to 1839 (TSSL…NSFR). The span at 1840–1857 (TNEKESMFHPYQEGENKS) shows a compositional bias: basic and acidic residues. Residues 1896-1911 (SSRLSQSQQSALYQQY) show a composition bias toward low complexity. A compositionally biased stretch (acidic residues) spans 1925-1935 (VDEEEDEDSED). Composition is skewed to basic and acidic residues over residues 1936–1963 (ESSK…KQRQ) and 1981–1997 (RKND…LGEK). 3 stretches are compositionally biased toward low complexity: residues 2039 to 2050 (SSSSISKPSSSS), 2061 to 2083 (APPA…RPSQ), and 2092 to 2104 (PSLA…DLLS).

Belongs to the SEC16 family.

Its subcellular location is the endoplasmic reticulum membrane. Functionally, involved in the initiation of assembly of the COPII coat required for the formation of transport vesicles from the endoplasmic reticulum (ER) and the selection of cargo molecules. Also involved in autophagy. The polypeptide is COPII coat assembly protein SEC16 (SEC16) (Debaryomyces hansenii (strain ATCC 36239 / CBS 767 / BCRC 21394 / JCM 1990 / NBRC 0083 / IGC 2968) (Yeast)).